We begin with the raw amino-acid sequence, 148 residues long: Lysozyme C (148 aa).

Positions 1–18 are cleaved as a signal peptide; that stretch reads MKAVIILGLVLLSVTVQG. The 130-residue stretch at 19-148 folds into the C-type lysozyme domain; that stretch reads KIFERCELAR…VSQYVQGCGV (130 aa). Intrachain disulfides connect Cys24/Cys146, Cys48/Cys134, Cys83/Cys99, and Cys95/Cys113. Catalysis depends on residues Glu53 and Asp71.

It belongs to the glycosyl hydrolase 22 family. Monomer.

The catalysed reaction is Hydrolysis of (1-&gt;4)-beta-linkages between N-acetylmuramic acid and N-acetyl-D-glucosamine residues in a peptidoglycan and between N-acetyl-D-glucosamine residues in chitodextrins.. Functionally, lysozymes have primarily a bacteriolytic function; those in tissues and body fluids are associated with the monocyte-macrophage system and enhance the activity of immunoagents. The polypeptide is Lysozyme C (LYZ) (Allenopithecus nigroviridis (Allen's swamp monkey)).